The primary structure comprises 126 residues: Holo-[acyl-carrier-protein] synthase (126 aa).

Positions 9 and 58 each coordinate Mg(2+).

It belongs to the P-Pant transferase superfamily. AcpS family. Mg(2+) is required as a cofactor.

Its subcellular location is the cytoplasm. The enzyme catalyses apo-[ACP] + CoA = holo-[ACP] + adenosine 3',5'-bisphosphate + H(+). Its function is as follows. Transfers the 4'-phosphopantetheine moiety from coenzyme A to a Ser of acyl-carrier-protein. The chain is Holo-[acyl-carrier-protein] synthase from Yersinia pseudotuberculosis serotype I (strain IP32953).